Here is a 214-residue protein sequence, read N- to C-terminus: NADH-ubiquinone oxidoreductase chain 5 (214 aa).

Helical transmembrane passes span 14 to 34 (LNTWALLLTLMATAFTATYSI), 58 to 78 (PLITAPLTRLALGSITAGMII), 92 to 112 (MPLITKTAAILMTILGIILAL), and 192 to 212 (TGLIKAYLGSFALSILVMILM).

This sequence belongs to the complex I subunit 5 family.

Its subcellular location is the mitochondrion inner membrane. It carries out the reaction a ubiquinone + NADH + 5 H(+)(in) = a ubiquinol + NAD(+) + 4 H(+)(out). Core subunit of the mitochondrial membrane respiratory chain NADH dehydrogenase (Complex I) that is believed to belong to the minimal assembly required for catalysis. Complex I functions in the transfer of electrons from NADH to the respiratory chain. The immediate electron acceptor for the enzyme is believed to be ubiquinone. The chain is NADH-ubiquinone oxidoreductase chain 5 (MT-ND5) from Anser caerulescens (Snow goose).